Reading from the N-terminus, the 1167-residue chain is Chromosome partition protein Smc (1167 aa).

32-39 (PNGCGKSN) contacts ATP. Coiled-coil stretches lie at residues 170–274 (ISKY…RIET), 310–390 (QREL…HNRD), 468–500 (GLQE…LETL), 653–870 (ALLR…ERAL), and 982–1011 (EYLD…ETRG).

It belongs to the SMC family. Homodimer.

The protein resides in the cytoplasm. Required for chromosome condensation and partitioning. The polypeptide is Chromosome partition protein Smc (Xanthomonas oryzae pv. oryzae (strain KACC10331 / KXO85)).